The following is a 468-amino-acid chain: 6-phosphogluconate dehydrogenase, decarboxylating (468 aa).

Residues 9-14 (GLAVMG), 32-34 (NRS), 73-75 (VKA), and Asn101 each bind NADP(+). Residues Asn101 and 127–129 (SGG) contribute to the substrate site. Lys182 functions as the Proton acceptor in the catalytic mechanism. 185 to 186 (HN) contributes to the substrate binding site. Glu189 functions as the Proton donor in the catalytic mechanism. Substrate is bound by residues Tyr190, Lys259, Arg286, Arg444, and His450.

This sequence belongs to the 6-phosphogluconate dehydrogenase family. Homodimer.

It carries out the reaction 6-phospho-D-gluconate + NADP(+) = D-ribulose 5-phosphate + CO2 + NADPH. Its pathway is carbohydrate degradation; pentose phosphate pathway; D-ribulose 5-phosphate from D-glucose 6-phosphate (oxidative stage): step 3/3. Its function is as follows. Catalyzes the oxidative decarboxylation of 6-phosphogluconate to ribulose 5-phosphate and CO(2), with concomitant reduction of NADP to NADPH. The protein is 6-phosphogluconate dehydrogenase, decarboxylating (gnd) of Staphylococcus epidermidis (strain ATCC 35984 / DSM 28319 / BCRC 17069 / CCUG 31568 / BM 3577 / RP62A).